The following is a 391-amino-acid chain: Putative gustatory receptor 98a (391 aa).

The Cytoplasmic portion of the chain corresponds to 1 to 31 (MEQMSGELHAASLLYMRRLMKCLGMLPFGQN). A helical membrane pass occupies residues 32–52 (LFSKGFCYVLLFVSLGFSSYW). Over 53-74 (RFSFDYEFDYDFLNDRFSSTID) the chain is Extracellular. The chain crosses the membrane as a helical span at residues 75–95 (LSNFVALVLGHAIIVLELLWG). Residues 96 to 128 (NCSKDVDRQLQAIHSQIKLQLGTSNSTDRVRRY) are Cytoplasmic-facing. Residues 129–149 (CNWIYGSLIIRWLIFIVVTIY) traverse the membrane as a helical segment. At 150-173 (SNRALTINATYSELVFLARFSEFT) the chain is on the extracellular side. A glycan (N-linked (GlcNAc...) asparagine) is linked at N157. The chain crosses the membrane as a helical span at residues 174 to 194 (LYCAVILFIYQELIVGGSNVL). Residues 195–239 (DELYRTRYEMWSIRRLSLQKLAKLQAIHNSLWQAIRCLECYFQLS) lie on the Cytoplasmic side of the membrane. Residues 240–260 (LITLLMKFFIDTSALPYWLYL) form a helical membrane-spanning segment. Residues 261 to 272 (SRVEHTRVAVQH) are Extracellular-facing. A helical membrane pass occupies residues 273-293 (YVATVECIKLLEIVVPCYLCT). Residues 294–347 (RCDAMQRKFLSMFYTVTTDRRSSQLNAALRSLNLQLSQEKYKFSAGGMVDINTE) lie on the Cytoplasmic side of the membrane. The chain crosses the membrane as a helical span at residues 348–368 (MLGKFFFGMISYIVICIQFSI). At 369–391 (NFRAKKMSNEQMSQNITSTSAPI) the chain is on the extracellular side. The N-linked (GlcNAc...) asparagine glycan is linked to N383.

It belongs to the insect chemoreceptor superfamily. Gustatory receptor (GR) family. Gr2a subfamily.

Its subcellular location is the cell membrane. Its function is as follows. Probable gustatory receptor which mediates acceptance or avoidance behavior, depending on its substrates. The polypeptide is Putative gustatory receptor 98a (Gr98a) (Drosophila melanogaster (Fruit fly)).